Consider the following 334-residue polypeptide: Pre-mRNA leakage protein 39 (334 aa).

As to quaternary structure, interacts with MLP1 and MLP2.

It localises to the nucleus membrane. In terms of biological role, involved in the nuclear retention of improperly spliced pre-mRNAs. The polypeptide is Pre-mRNA leakage protein 39 (PML39) (Saccharomyces cerevisiae (strain ATCC 204508 / S288c) (Baker's yeast)).